A 648-amino-acid chain; its full sequence is Threonine--tRNA ligase (648 aa).

One can recognise a TGS domain in the interval 1–62; that stretch reads MVEIILPDGS…PHGAQVAIIT (62 aa). Residues 243–536 form a catalytic region; the sequence is DHRRIGKDLD…LVEHYAGWFP (294 aa). Residues Cys336, His387, and His513 each contribute to the Zn(2+) site.

This sequence belongs to the class-II aminoacyl-tRNA synthetase family. As to quaternary structure, homodimer. The cofactor is Zn(2+).

The protein resides in the cytoplasm. The enzyme catalyses tRNA(Thr) + L-threonine + ATP = L-threonyl-tRNA(Thr) + AMP + diphosphate + H(+). Catalyzes the attachment of threonine to tRNA(Thr) in a two-step reaction: L-threonine is first activated by ATP to form Thr-AMP and then transferred to the acceptor end of tRNA(Thr). Also edits incorrectly charged L-seryl-tRNA(Thr). The protein is Threonine--tRNA ligase of Magnetococcus marinus (strain ATCC BAA-1437 / JCM 17883 / MC-1).